A 373-amino-acid polypeptide reads, in one-letter code: 3-dehydroquinate synthase (373 aa).

Residues 74 to 79 (DAEAGK), 108 to 112 (GAATD), 132 to 133 (TT), lysine 145, lysine 154, and 172 to 175 (TLET) contribute to the NAD(+) site. Zn(2+)-binding residues include glutamate 187, histidine 250, and histidine 266.

Belongs to the sugar phosphate cyclases superfamily. Dehydroquinate synthase family. Requires Co(2+) as cofactor. Zn(2+) serves as cofactor. NAD(+) is required as a cofactor.

It is found in the cytoplasm. It carries out the reaction 7-phospho-2-dehydro-3-deoxy-D-arabino-heptonate = 3-dehydroquinate + phosphate. It functions in the pathway metabolic intermediate biosynthesis; chorismate biosynthesis; chorismate from D-erythrose 4-phosphate and phosphoenolpyruvate: step 2/7. Functionally, catalyzes the conversion of 3-deoxy-D-arabino-heptulosonate 7-phosphate (DAHP) to dehydroquinate (DHQ). The sequence is that of 3-dehydroquinate synthase from Nocardia farcinica (strain IFM 10152).